Reading from the N-terminus, the 875-residue chain is Kelch-like protein 29 (875 aa).

The span at 115–126 shows a compositional bias: polar residues; the sequence is WGQTPINQSTPW. 2 disordered regions span residues 115-145 and 248-291; these read WGQTPINQSTPWDTDEPPSKQMRESDNPGTG and GPTA…DSAH. The segment covering 131–140 has biased composition (basic and acidic residues); sequence PPSKQMRESD. In terms of domain architecture, BTB spans 329 to 401; sequence TDLKIVVEGR…VYTGSLVIDS (73 aa). Kelch repeat units follow at residues 585 to 635, 637 to 683, 684 to 730, 732 to 778, 779 to 821, and 822 to 870; these read VIVL…VSAG, NIYL…VYDG, KIYT…VCGG, IYVF…TLNG, FVFI…VLDG, and KIYA…VIKK.

The sequence is that of Kelch-like protein 29 (KLHL29) from Homo sapiens (Human).